A 374-amino-acid polypeptide reads, in one-letter code: Protein Brevis radix-like 2 (374 aa).

2 disordered regions span residues 12–43 and 57–80; these read NTNN…IKSL and AYKS…ADSD. Residues 65 to 80 show a composition bias toward polar residues; it reads SGSSNQNKNRSYADSD. The region spanning 143–198 is the BRX 1 domain; that stretch reads KEWVAQVEPGVLITFVSLPEGGNDMKRIRFSREMFDKWQAQKWWAENFDKVMELYN. Positions 205–316 are disordered; that stretch reads QSVPLPTPPR…EELSVSNASD (112 aa). Polar residues-rich tracts occupy residues 246–259 and 267–288; these read SSGS…TQTQ and GLAT…SSVD. Over residues 289–307 the composition is skewed to basic and acidic residues; the sequence is ESARSSFSREEEEADHSGE. In terms of domain architecture, BRX 2 spans 319-374; it reads TEWVEQDEAGVYITIRALPDGTRELRRVRFSREKFGETNARLWWEQNRARIQQQYL.

Belongs to the BRX family. As to expression, expressed in roots.

Its subcellular location is the nucleus. The chain is Protein Brevis radix-like 2 (BRXL2) from Arabidopsis thaliana (Mouse-ear cress).